The following is a 324-amino-acid chain: Methionyl-tRNA formyltransferase (324 aa).

A (6S)-5,6,7,8-tetrahydrofolate-binding site is contributed by 112 to 115 (SILP).

This sequence belongs to the Fmt family.

The enzyme catalyses L-methionyl-tRNA(fMet) + (6R)-10-formyltetrahydrofolate = N-formyl-L-methionyl-tRNA(fMet) + (6S)-5,6,7,8-tetrahydrofolate + H(+). Functionally, attaches a formyl group to the free amino group of methionyl-tRNA(fMet). The formyl group appears to play a dual role in the initiator identity of N-formylmethionyl-tRNA by promoting its recognition by IF2 and preventing the misappropriation of this tRNA by the elongation apparatus. The polypeptide is Methionyl-tRNA formyltransferase (Shewanella loihica (strain ATCC BAA-1088 / PV-4)).